The sequence spans 273 residues: Phosphate import ATP-binding protein PstB (273 aa).

The ABC transporter domain maps to 17–259 (LSAENLSIFY…DKTNNIFQNP (243 aa)). 49 to 56 (GPSGCGKS) contributes to the ATP binding site.

It belongs to the ABC transporter superfamily. Phosphate importer (TC 3.A.1.7) family. In terms of assembly, the complex is composed of two ATP-binding proteins (PstB), two transmembrane proteins (PstC and PstA) and a solute-binding protein (PstS).

The protein resides in the cell inner membrane. It catalyses the reaction phosphate(out) + ATP + H2O = ADP + 2 phosphate(in) + H(+). Its function is as follows. Part of the ABC transporter complex PstSACB involved in phosphate import. Responsible for energy coupling to the transport system. This chain is Phosphate import ATP-binding protein PstB, found in Trichodesmium erythraeum (strain IMS101).